Reading from the N-terminus, the 342-residue chain is S-adenosylmethionine:tRNA ribosyltransferase-isomerase (342 aa).

This sequence belongs to the QueA family. Monomer.

The protein resides in the cytoplasm. It catalyses the reaction 7-aminomethyl-7-carbaguanosine(34) in tRNA + S-adenosyl-L-methionine = epoxyqueuosine(34) in tRNA + adenine + L-methionine + 2 H(+). It functions in the pathway tRNA modification; tRNA-queuosine biosynthesis. Its function is as follows. Transfers and isomerizes the ribose moiety from AdoMet to the 7-aminomethyl group of 7-deazaguanine (preQ1-tRNA) to give epoxyqueuosine (oQ-tRNA). The sequence is that of S-adenosylmethionine:tRNA ribosyltransferase-isomerase from Bacillus velezensis (strain DSM 23117 / BGSC 10A6 / LMG 26770 / FZB42) (Bacillus amyloliquefaciens subsp. plantarum).